A 177-amino-acid polypeptide reads, in one-letter code: Nucleoside triphosphate/diphosphate phosphatase (177 aa).

Residue arginine 23 is the Proton donor of the active site. Mg(2+) contacts are provided by asparagine 87, aspartate 103, aspartate 105, aspartate 107, aspartate 120, and glutamate 123.

It belongs to the Ntdp family. Mg(2+) serves as cofactor.

The catalysed reaction is a ribonucleoside 5'-triphosphate + H2O = a ribonucleoside 5'-diphosphate + phosphate + H(+). It catalyses the reaction a ribonucleoside 5'-diphosphate + H2O = a ribonucleoside 5'-phosphate + phosphate + H(+). Its function is as follows. Has nucleoside phosphatase activity towards nucleoside triphosphates and nucleoside diphosphates. This Streptococcus pyogenes serotype M1 protein is Nucleoside triphosphate/diphosphate phosphatase.